A 183-amino-acid polypeptide reads, in one-letter code: Potassium-transporting ATPase KdpC subunit (183 aa).

Residues 10-30 traverse the membrane as a helical segment; sequence ASLLVLSLVTGVAYPLLVTGI.

This sequence belongs to the KdpC family. The system is composed of three essential subunits: KdpA, KdpB and KdpC.

The protein localises to the cell inner membrane. Its function is as follows. Part of the high-affinity ATP-driven potassium transport (or Kdp) system, which catalyzes the hydrolysis of ATP coupled with the electrogenic transport of potassium into the cytoplasm. This subunit acts as a catalytic chaperone that increases the ATP-binding affinity of the ATP-hydrolyzing subunit KdpB by the formation of a transient KdpB/KdpC/ATP ternary complex. This is Potassium-transporting ATPase KdpC subunit from Pseudomonas aeruginosa (strain UCBPP-PA14).